The chain runs to 203 residues: Small ribosomal subunit protein uS4 (203 aa).

Positions 93-156 (QRLDNVVFRL…MKVPAILEAV (64 aa)) constitute an S4 RNA-binding domain.

The protein belongs to the universal ribosomal protein uS4 family. As to quaternary structure, part of the 30S ribosomal subunit. Contacts protein S5. The interaction surface between S4 and S5 is involved in control of translational fidelity.

In terms of biological role, one of the primary rRNA binding proteins, it binds directly to 16S rRNA where it nucleates assembly of the body of the 30S subunit. With S5 and S12 plays an important role in translational accuracy. The sequence is that of Small ribosomal subunit protein uS4 from Lactococcus lactis subsp. lactis (strain IL1403) (Streptococcus lactis).